A 200-amino-acid polypeptide reads, in one-letter code: Potassium-transporting ATPase KdpC subunit (200 aa).

Residues 13 to 33 (ITLIFWLITAIIYPLAILVVG) form a helical membrane-spanning segment.

This sequence belongs to the KdpC family. As to quaternary structure, the system is composed of three essential subunits: KdpA, KdpB and KdpC.

Its subcellular location is the cell membrane. Its function is as follows. Part of the high-affinity ATP-driven potassium transport (or Kdp) system, which catalyzes the hydrolysis of ATP coupled with the electrogenic transport of potassium into the cytoplasm. This subunit acts as a catalytic chaperone that increases the ATP-binding affinity of the ATP-hydrolyzing subunit KdpB by the formation of a transient KdpB/KdpC/ATP ternary complex. This is Potassium-transporting ATPase KdpC subunit from Anabaena sp. (strain L31).